Consider the following 235-residue polypeptide: Peptidyl-tRNA hydrolase (235 aa).

Residue Tyr14 participates in tRNA binding. His19 acts as the Proton acceptor in catalysis. TRNA is bound by residues Phe64, Asn66, and Asn112. The tract at residues 188–235 (APARNSGTRPDNPGKGSPEKPAAKPANDPIAEPPSLSDRLRALTERFR) is disordered. Residues 225-235 (DRLRALTERFR) show a composition bias toward basic and acidic residues.

This sequence belongs to the PTH family. In terms of assembly, monomer.

The protein resides in the cytoplasm. It catalyses the reaction an N-acyl-L-alpha-aminoacyl-tRNA + H2O = an N-acyl-L-amino acid + a tRNA + H(+). In terms of biological role, hydrolyzes ribosome-free peptidyl-tRNAs (with 1 or more amino acids incorporated), which drop off the ribosome during protein synthesis, or as a result of ribosome stalling. Functionally, catalyzes the release of premature peptidyl moieties from peptidyl-tRNA molecules trapped in stalled 50S ribosomal subunits, and thus maintains levels of free tRNAs and 50S ribosomes. The polypeptide is Peptidyl-tRNA hydrolase (Paracoccus denitrificans (strain Pd 1222)).